The chain runs to 142 residues: Hemoglobin subunit alpha-1 (142 aa).

Residue serine 1 is modified to N-acetylserine. One can recognise a Globin domain in the interval serine 1 to arginine 142. Histidine 59 serves as a coordination point for O2. Histidine 88 contacts heme b.

It belongs to the globin family. Hb1 is a heterotetramer of two alpha-2 chains and two beta chains. Red blood cells.

Its function is as follows. Involved in oxygen transport from gills to the various peripheral tissues. In Notothenia neglecta (Yellowbelly rockcod), this protein is Hemoglobin subunit alpha-1 (hba1).